The sequence spans 311 residues: Prohibitin-2 (311 aa).

The chain crosses the membrane as a helical span at residues 39–57 (GAGMGLAGLVLLGGAAFVA). The short motif at 141 to 144 (YRTL) is the AIM element.

It belongs to the prohibitin family. The mitochondrial prohibitin complex consists of two subunits (PHB1 and PHB2). The subunits assemble into a membrane-associated ring-shaped supercomplex of approximately 1 mDa. Interacts with ATG24/SNX4; the interaction is direct and plays a role in mitophagy.

It is found in the mitochondrion inner membrane. Functionally, prohibitin probably acts as a holdase/unfoldase for the stabilization of newly synthesized mitochondrial proteins. Involved in mitophagy. Required for the switch to necrotrophic growth. The sequence is that of Prohibitin-2 from Colletotrichum higginsianum (strain IMI 349063) (Crucifer anthracnose fungus).